The sequence spans 398 residues: KiSS-1 receptor (398 aa).

At methionine 1–proline 46 the chain is on the extracellular side. N-linked (GlcNAc...) asparagine glycans are attached at residues asparagine 10, asparagine 18, and asparagine 28. A helical membrane pass occupies residues leucine 47 to isoleucine 67. The Cytoplasmic portion of the chain corresponds to cysteine 68–asparagine 78. A helical membrane pass occupies residues phenylalanine 79–leucine 101. At leucine 102–tyrosine 120 the chain is on the extracellular side. A disulfide bridge links cysteine 115 with cysteine 191. The chain crosses the membrane as a helical span at residues isoleucine 121–valine 138. Residues aspartate 139–arginine 157 are Cytoplasmic-facing. Residues leucine 158–leucine 178 form a helical membrane-spanning segment. At alanine 179–arginine 202 the chain is on the extracellular side. The chain crosses the membrane as a helical span at residues alanine 203 to cysteine 223. Residues tyrosine 224–arginine 263 are Cytoplasmic-facing. A helical membrane pass occupies residues leucine 264–valine 284. Residues leucine 285–lysine 305 lie on the Extracellular side of the membrane. The helical transmembrane segment at threonine 306–serine 328 threads the bilayer. Residues histidine 329–leucine 398 are Cytoplasmic-facing. The tract at residues alanine 341–leucine 363 is disordered.

It belongs to the G-protein coupled receptor 1 family. As to expression, most highly expressed in the pancreas, placenta and spinal cord, with lower-level of expression in peripheral blood leukocytes, kidney, lung, fetal liver, stomach, small intestine, testes, spleen, thymus, adrenal glands and lymph nodes. In the adult brain, expressed in the superior frontal gyrus, putamen, caudate nucleus, cingulate gyrus, nucleus accumbens, hippocampus, pons and amygdala, as well as the hypothalamus and pituitary. Expression levels are higher in early (7-9 weeks) than term placentas. Expression levels were increased in both early placentas and molar pregnancies and were reduced in choriocarcinoma cells. Expressed at higher levels in first trimester trophoblasts than at term of gestation. Also found in the extravillous trophoblast suggesting endocrine/paracrine activation mechanism.

It localises to the cell membrane. Its function is as follows. Receptor for metastin (kisspeptin-54 or kp-54), a C-terminally amidated peptide of KiSS1. KiSS1 is a metastasis suppressor protein that suppresses metastases in malignant melanomas and in some breast carcinomas without affecting tumorigenicity. The metastasis suppressor properties may be mediated in part by cell cycle arrest and induction of apoptosis in malignant cells. The receptor is essential for normal gonadotropin-released hormone physiology and for puberty. The hypothalamic KiSS1/KISS1R system is a pivotal factor in central regulation of the gonadotropic axis at puberty and in adulthood. The receptor is also probably involved in the regulation and fine-tuning of trophoblast invasion generated by the trophoblast itself. Analysis of the transduction pathways activated by the receptor identifies coupling to phospholipase C and intracellular calcium release through pertussis toxin-insensitive G(q) proteins. The sequence is that of KiSS-1 receptor (KISS1R) from Homo sapiens (Human).